A 357-amino-acid polypeptide reads, in one-letter code: tRNA-specific 2-thiouridylase MnmA (357 aa).

Residues 7–14 (GLSGGVDS) and Leu-33 each bind ATP. Residue Cys-94 is the Nucleophile of the active site. The cysteines at positions 94 and 193 are disulfide-linked. Gly-119 lines the ATP pocket. Residues 143-145 (KDQ) are interaction with tRNA. The active-site Cysteine persulfide intermediate is the Cys-193. The interval 298–299 (RY) is interaction with tRNA.

Belongs to the MnmA/TRMU family.

It localises to the cytoplasm. It carries out the reaction S-sulfanyl-L-cysteinyl-[protein] + uridine(34) in tRNA + AH2 + ATP = 2-thiouridine(34) in tRNA + L-cysteinyl-[protein] + A + AMP + diphosphate + H(+). Functionally, catalyzes the 2-thiolation of uridine at the wobble position (U34) of tRNA, leading to the formation of s(2)U34. In Synechococcus sp. (strain ATCC 27144 / PCC 6301 / SAUG 1402/1) (Anacystis nidulans), this protein is tRNA-specific 2-thiouridylase MnmA.